The sequence spans 277 residues: Uracil phosphoribosyltransferase homolog (277 aa).

Residues 1–69 (MEAMPCHNQR…AAAPSPAAED (69 aa)) are disordered. The span at 37–69 (AEPSEGSSSGSPSPDSSSGSNGAAAAPSPAAED) shows a compositional bias: low complexity. GTP-binding positions include arginine 101, arginine 110, and 144 to 147 (EKGN). Arginine 154 serves as a coordination point for 5-phospho-alpha-D-ribose 1-diphosphate. Arginine 171 and arginine 200 together coordinate GTP. 206–214 (YPILSTGNT) contacts 5-phospho-alpha-D-ribose 1-diphosphate. Position 267–269 (267–269 (THF)) interacts with uracil.

This sequence belongs to the UPRTase family.

Its subcellular location is the cytoplasm. The protein resides in the nucleus. In Gallus gallus (Chicken), this protein is Uracil phosphoribosyltransferase homolog (UPRT).